Here is a 577-residue protein sequence, read N- to C-terminus: Cryptochrome DASH, chloroplastic/mitochondrial (577 aa).

The N-terminal 53 residues, 1 to 53 (MIKQPFLLTKFTPFSSKSKHTLFTFHCNFSIKMASLTARTTPTVQNVPGLTPE), are a transit peptide targeting the chloroplast and mitochondrion. The Photolyase/cryptochrome alpha/beta domain occupies 78–219 (GVAIVWFRND…GNDPGSGNTT (142 aa)). The interval 550-577 (TKKTGDSKTAFSSRRGRPEDNRRKRHGY) is disordered.

This sequence belongs to the DNA photolyase class-1 family. Requires FAD as cofactor. The cofactor is (6R)-5,10-methylene-5,6,7,8-tetrahydrofolate. Expressed in the endosperm and embryo 96 hours after seed imbibition. In the embryo, detected in the root meristem, the root cap, the shoot apical meristem and the epidermis of cotyledons. In adult plants, detcted in roots, the whole leaf lamina, the stem and in glandular trichomes.

Its subcellular location is the plastid. The protein resides in the chloroplast. It localises to the mitochondrion. May have a photoreceptor function and might bind ss- and ds-DNA in a sequence non-specific manner. Lacks photolyase activity. Has a potential role in detecting the dawn and dusk transitions and, consequently, in circadian input pathways. This is Cryptochrome DASH, chloroplastic/mitochondrial from Solanum lycopersicum (Tomato).